We begin with the raw amino-acid sequence, 174 residues long: Small ribosomal subunit protein uS7c (174 aa).

This sequence belongs to the universal ribosomal protein uS7 family. As to quaternary structure, part of the 30S ribosomal subunit.

Its subcellular location is the plastid. The protein localises to the chloroplast. Functionally, one of the primary rRNA binding proteins, it binds directly to 16S rRNA where it nucleates assembly of the head domain of the 30S subunit. The chain is Small ribosomal subunit protein uS7c (rps7) from Stigeoclonium helveticum (Green alga).